Reading from the N-terminus, the 26-residue chain is Probable early E4 17 kDa protein (26 aa).

The chain is Probable early E4 17 kDa protein from Homo sapiens (Human).